The sequence spans 124 residues: Salivary protein 15 Iric-3 (124 aa).

Residues 1–22 (MESFVAMKVVCIILLFVIAAEA) form the signal peptide. N-linked (GlcNAc...) asparagine glycans are attached at residues Asn82 and Asn93. Positions 105–124 (GPNNQTCHKKDECVGYIPGC) are CD4-binding.

This sequence belongs to the salp15 family. In terms of assembly, interacts with host CD4. Interacts with host DC-SIGN (CD209). Interacts with Borrelia outer surface protein C (OspC). In terms of tissue distribution, expressed in salivary glands. Detected in fed adult female.

The protein localises to the secreted. In terms of biological role, salivary tick protein that downregulates host immune system by binding to both dendritic cells, and CD4(+) T cells. Specifically binds to the CD4 coreceptor on T cells. This interaction prevents the activation of the Src kinase, Lck, and its downstream substrate Zap-70, and results in deficient activation of PLCgamma1, the repression of calcium fluxes triggered by T-cell antigen receptor (TCR) ligation, and a subsequent reduction in interleukin-2 production. This salivary protein also binds to DC-SIGN (CD209) on dendritic cells (DC) and activates the Raf-1 kinase/MEK signaling pathway that results in down-regulating expression of pro-inflammatory cytokines. Furthermore, it inhibits T cell proliferation induced by DCs. In addition, it inhibits in vitro keratinocyte inflammation induced by Borrelia burgdorferi or by the major outer surface protein (OspC) of Borrelia. In addition, it downregulates chemokines and monocyte chemoattractant protein 1, as well as several antimicrobial peptides such as defensins, cathelicidin, psoriasin, and RNase 7. Apart from its immunomodulatory activities, it is also associated with protection of Borrelia spirochetes from antibody-mediated killing through its binding to OspC. In vivo, tests on different immune disease animal models show promising therapeutic results, e.g., in inhibiting HIV infection, experimental autoimmune encephalomyelitis, transplantation rejection, and asthma. The protein is Salivary protein 15 Iric-3 of Ixodes ricinus (Common tick).